Here is a 28-residue protein sequence, read N- to C-terminus: Taicatoxin, alpha-neurotoxin-like component (28 aa).

The cysteines at positions 3 and 21 are disulfide-linked.

It belongs to the three-finger toxin family. Long-chain subfamily. Type II alpha-neurotoxin sub-subfamily. Heterotrimer composed of this alpha-neurotoxin-like peptide of 8 kDa, a neurotoxic phospholipase of 16 kDa (AC Q7LZG2) and a serine protease inhibitor of 7 kDa (AC B7S4N9) at an approximate stoichiometry of 1:1:4; non-covalently linked. As to expression, expressed by the venom gland.

Its subcellular location is the secreted. The heterotrimer blocks the voltage-dependent L-type calcium channels (Cav1/CACNA1) from the heart, and the small conductance calcium-activated potassium channels (KCa2/KCNN) in the chromaffin cells and in the brain. Is very toxic to mice. The polypeptide is Taicatoxin, alpha-neurotoxin-like component (Oxyuranus scutellatus scutellatus (Australian taipan)).